A 974-amino-acid chain; its full sequence is Membrane-associated phosphatidylinositol transfer protein 3 (974 aa).

Phosphoserine is present on residues Ser-30, Ser-31, Ser-109, Ser-295, Ser-298, Ser-321, Ser-343, and Ser-495. Residues 310 to 347 (CSLASSKRLSKSNVDVSSGVEDEDPKRPLPRKQSDSST) are disordered. The segment covering 312-325 (LASSKRLSKSNVDV) has biased composition (polar residues). A DDHD domain is found at 390 to 594 (FDFDVSDFFL…VAFILRQVMR (205 aa)). The segment at 497-535 (PLLDAPASPPQAPRFQRTERRLSKGSSHSDSSESSDSLA) is disordered. Residues 520-533 (KGSSHSDSSESSDS) show a composition bias toward low complexity. Residues Ser-612, Ser-907, Ser-928, and Ser-946 each carry the phosphoserine modification. Residues 927–974 (MSVQQPDPPAANPKPERAQSQPESDKDHERPLPALSWARGPPKFESVP) form a disordered region.

Belongs to the PtdIns transfer protein family. PI transfer class IIA subfamily. Interacts with PTK2B via its C-terminus.

The protein resides in the endomembrane system. In terms of biological role, catalyzes the transfer of phosphatidylinositol and phosphatidylcholine between membranes (in vitro). Binds calcium ions. This chain is Membrane-associated phosphatidylinositol transfer protein 3 (Pitpnm3), found in Mus musculus (Mouse).